A 570-amino-acid chain; its full sequence is E3 ubiquitin-protein ligase ZFP91 (570 aa).

The span at 1–12 (MPGETEEPRPPE) shows a compositional bias: basic and acidic residues. A disordered region spans residues 1–306 (MPGETEEPRP…PRLPKRRKKP (306 aa)). Low complexity-rich tracts occupy residues 31–43 (QRPP…APAG) and 59–68 (AAAAAAAAAV). The segment covering 69-82 (SRRRKAEYPRRRRS) has biased composition (basic residues). 2 positions are modified to phosphoserine: S83 and S103. The span at 94-104 (QQPQAAKSPSP) shows a compositional bias: polar residues. The span at 119–128 (VTTDKDPKEE) shows a compositional bias: basic and acidic residues. A compositionally biased stretch (acidic residues) spans 207–223 (SEEEEEEEEEMLISEEE). Composition is skewed to basic and acidic residues over residues 224 to 245 (IPFK…ETPK) and 252 to 269 (KVKE…VEVE). A compositionally biased stretch (acidic residues) spans 270-282 (VKEEENEIREDEE). 5 consecutive C2H2-type zinc fingers follow at residues 311 to 336 (VRCE…KYQH), 342 to 366 (YVCP…AKHH), 372 to 394 (YICE…RMIH), 400 to 422 (LQCE…MKKH), and 430 to 453 (FSCN…AKSH). The interval 338-368 (LKKKYVCPHPSCGRLFRLQKQLLRHAKHHTD) is interaction with MAP3K14/NIK.

This sequence belongs to the krueppel C2H2-type zinc-finger protein family. Interacts with MAP3K14/NIK. As to expression, expressed ubiquitously, particularly at high level in testis. Isoform 2 is testis specific.

It is found in the nucleus. The enzyme catalyses S-ubiquitinyl-[E2 ubiquitin-conjugating enzyme]-L-cysteine + [acceptor protein]-L-lysine = [E2 ubiquitin-conjugating enzyme]-L-cysteine + N(6)-ubiquitinyl-[acceptor protein]-L-lysine.. The protein operates within protein modification; protein ubiquitination. Atypical E3 ubiquitin-protein ligase that mediates 'Lys-63'-linked ubiquitination of MAP3K14/NIK, leading to stabilize and activate MAP3K14/NIK. It thereby acts as an activator of the non-canonical NF-kappa-B2/NFKB2 pathway. May also play an important role in cell proliferation and/or anti-apoptosis. This is E3 ubiquitin-protein ligase ZFP91 (ZFP91) from Homo sapiens (Human).